The chain runs to 348 residues: Isopentenyl-diphosphate delta-isomerase (348 aa).

9-10 (RK) provides a ligand contact to substrate. Residues 68–70 (AMT), S98, and N127 contribute to the FMN site. Q157 lines the substrate pocket. Residue E158 participates in Mg(2+) binding. Residues K188, S213, T218, and 286–287 (AG) each bind FMN.

Belongs to the IPP isomerase type 2 family. As to quaternary structure, homooctamer. Dimer of tetramers. FMN serves as cofactor. It depends on NADPH as a cofactor. The cofactor is Mg(2+).

It localises to the cytoplasm. The enzyme catalyses isopentenyl diphosphate = dimethylallyl diphosphate. Involved in the biosynthesis of isoprenoids. Catalyzes the 1,3-allylic rearrangement of the homoallylic substrate isopentenyl (IPP) to its allylic isomer, dimethylallyl diphosphate (DMAPP). In Limosilactobacillus reuteri subsp. reuteri (strain JCM 1112) (Lactobacillus reuteri), this protein is Isopentenyl-diphosphate delta-isomerase.